Consider the following 326-residue polypeptide: Meiotically up-regulated gene 113 protein (326 aa).

The protein resides in the cytoplasm. Functionally, has a role in meiosis. This chain is Meiotically up-regulated gene 113 protein (mug113), found in Schizosaccharomyces pombe (strain 972 / ATCC 24843) (Fission yeast).